Reading from the N-terminus, the 213-residue chain is Adenylate kinase (213 aa).

10 to 15 contributes to the ATP binding site; sequence GAGKGT. The interval 30–59 is NMP; that stretch reads STGDMFRAAMANQTEMGLLAKSYIDKGDLV. AMP-binding positions include T31, R36, 57–59, 86–89, and Q93; these read DLV and GYPR. The tract at residues 127 to 160 is LID; it reads GRIIHKKTGETFHKIFNPPAGDYDENDYYQREDD. Residues R128 and 137–138 each bind ATP; that span reads TF. Positions 157 and 168 each coordinate AMP. Q196 provides a ligand contact to ATP.

Belongs to the adenylate kinase family. Monomer.

The protein localises to the cytoplasm. The catalysed reaction is AMP + ATP = 2 ADP. The protein operates within purine metabolism; AMP biosynthesis via salvage pathway; AMP from ADP: step 1/1. Functionally, catalyzes the reversible transfer of the terminal phosphate group between ATP and AMP. Plays an important role in cellular energy homeostasis and in adenine nucleotide metabolism. The protein is Adenylate kinase of Streptococcus uberis (strain ATCC BAA-854 / 0140J).